Consider the following 142-residue polypeptide: Rhinocerosin (142 aa).

Positions 1-16 (MMKLYIVFGFIAFSAA) are cleaved as a signal peptide. The propeptide occupies 17–70 (YVVPEGYYEPEYYPADGYESERVARASPAELIFDEDLADEPEVEEPQYYIRTRR). The segment at 72-96 (LQPGAPNFPMPGSQLPTSITSNIEK) is disordered. Positions 85–96 (QLPTSITSNIEK) are enriched in polar residues.

Belongs to the coleoptericin family. In terms of tissue distribution, strongly expressed in the fat body and the Malpighian tubules, and weakly expressed in hemocytes and midgut.

The protein resides in the secreted. Has strong antibacterial activity against E.coli, Streptococcus pyogenes, Staphylococcus aureus but not against Pseudomonas aeruginosa. The sequence is that of Rhinocerosin from Oryctes rhinoceros (Coconut rhinoceros beetle).